A 405-amino-acid chain; its full sequence is Secreted aspartic protease FUS4 (405 aa).

Residues 1–24 (MLAIATLHVALQVFGAFSLSHAAA) form the signal peptide. The Peptidase A1 domain maps to 49–400 (YLFNVTVGSP…NFEERSFGLA (352 aa)). Asn-52, Asn-61, Asn-107, and Asn-123 each carry an N-linked (GlcNAc...) asparagine glycan. Residues Cys-318 and Cys-356 are joined by a disulfide bond.

This sequence belongs to the peptidase A1 family.

The protein resides in the secreted. Functionally, secreted aspartic protease; part of the gene cluster that mediates the biosynthesis of the mycotoxin fusarin C. Within the cluster, FUS1, FUS2, FUS8 and FUS9 are sufficient for fusarin production. The other FUS cluster members are not essential for fusarin C biosynthesis. This Gibberella fujikuroi (strain CBS 195.34 / IMI 58289 / NRRL A-6831) (Bakanae and foot rot disease fungus) protein is Secreted aspartic protease FUS4.